Consider the following 341-residue polypeptide: Protein huluwa (341 aa).

Residues 1–36 lie on the Extracellular side of the membrane; it reads MVTLSPAYLPSDGGTQAASAAPSVEENWVVQPSLTL. The helical transmembrane segment at 37–57 threads the bilayer; it reads LVLLLVPCVLLLFFLNCFLLF. The Cytoplasmic segment spans residues 58–341; it reads HRLPAFSLRK…PMMCSKQYWI (284 aa). The VPPNSP motif motif lies at 206–211; the sequence is VPPNTP.

It belongs to the huluwa family. As to quaternary structure, interacts with axin1; leading to promote the tankyrase-mediated degradation of axin. Interacts with axin2; leading to promote the tankyrase-mediated degradation of axin.

It is found in the cell membrane. Its function is as follows. Key maternal determinant of the dorsal organizer and body axis formation in vertebrates that acts by promoting stabilization of beta-catenin (ctnnb1). Localizes on the plasma membrane of the future dorsal blastomeres in early blastulas and binds to and promotes the tankyrase-mediated degradation of axin (axin1 and axin2). Axin degradation results in stabilization and nuclear translocation of beta-catenin (ctnnb1) for activating organizer-specific target gene expression. This Xenopus laevis (African clawed frog) protein is Protein huluwa.